The chain runs to 385 residues: Selenoprotein P (385 aa).

A signal peptide spans 1–19 (MWRSLGLALALCLLPYGGA). Position 59 (Sec59) is a non-standard amino acid, selenocysteine. A cross-link (cysteinyl-selenocysteine (Sec-Cys); in isoform Se-P1) is located at residues 59-62 (UYLC). Asn83, Asn174, and Asn188 each carry an N-linked (GlcNAc...) asparagine glycan. 2 disulfide bridges follow: Cys168–Cys186 and Cys172–Cys175. Residues 196–262 (KTTEPSEEHN…KGQHRQGHLE (67 aa)) form a disordered region. The segment covering 243–258 (LHHHHHHHKHKGQHRQ) has biased composition (basic residues). A non-standard amino acid (selenocysteine) is located at residue Sec264. Ser269 carries the post-translational modification Phosphoserine. Non-standard amino acids (selenocysteine) are located at Sec282, Sec323, Sec335, and Sec357. Residues 357-385 (UHSQHVSPTEASPNUSUNNKTKKUKUNLN) form a disordered region. Residues 360 to 369 (QHVSPTEASP) show a composition bias toward polar residues. Residue Thr365 is glycosylated (O-linked (Hex...) threonine; partial). Non-standard amino acids (selenocysteine) are located at Sec371, Sec373, Sec380, and Sec382. The segment covering 376–385 (KTKKUKUNLN) has biased composition (basic residues).

It belongs to the selenoprotein P family. In terms of processing, isoform Se-P1 contains several disulfide bridges and a selenide-sulfide bond between Sec-59 and Cys-62. These bonds are speculated to serve as redox-active pairs. Phosphorylation sites are present in the extracellular medium. As to expression, widely expressed, mainly by the liver. Secreted in plasma.

It localises to the secreted. Might be responsible for some of the extracellular antioxidant defense properties of selenium or might be involved in the transport of selenium. May supply selenium to tissues such as brain and testis. This chain is Selenoprotein P, found in Rattus norvegicus (Rat).